We begin with the raw amino-acid sequence, 1129 residues long: CRISPR-associated endonuclease Cas12b (1129 aa).

The tract at residues 1–14 (MAVKSIKVKLRLDD) is WED-I (OBD-I) domain. The binds sgRNA stretch occupies residues 4-9 (KSIKVK). An REC1 (Helical-1)domain region spans residues 15 to 386 (MPEIRAGLWK…FATFTLPDAT (372 aa)). 2 binds DNA protospacer adjacent motif (PAM) on target DNA regions span residues 118–122 (QQIAR) and 143–144 (GN). The WED-II (OBD-II) domain stretch occupies residues 387 to 518 (AHPIWTRFDK…QSQSEARGER (132 aa)). Residues 442 to 446 (SMSEQ) are binds sgRNA. The segment at 519–628 (RPPYAAVFRL…LLKLPGETES (110 aa)) is ruvC-I domain. Aspartate 570 functions as the For DNase activity of RuvC domain in the catalytic mechanism. The segment at 573–574 (LR) is binds non-target ssDNA. The segment at 629–658 (KDLRAIREERQRTLRQLRTQLAYLRLLVRC) is bridge helix domain. An REC2 (Helical-II) domain region spans residues 659–784 (GSEDVGRRER…SFFGKVSGQV (126 aa)). 5 binds sgRNA regions span residues 742 to 746 (RPKIR), 753 to 754 (VG), 792 to 796 (RFAIT), 800 to 819 (HIDH…IIME), and 835 to 839 (WVAKY). The interval 785-900 (IRAEKGSRFA…GTMYAAFSSR (116 aa)) is ruvC-II domain. The For DNase activity of RuvC domain role is filled by glutamate 848. Residues 897-900 (FSSR) form a binds non-target ssDNA region. Residues serine 899 and arginine 911 each contribute to the phosphate site. A nuc-I domain region spans residues 901–974 (FDARTGAPGI…SAEEGDFHQI (74 aa)). The tract at residues 973–978 (QIHADL) is binds sgRNA. Positions 975–993 (HADLNAAQNLQQRLWSDFD) are ruvC-III domain. The For DNase activity of RuvC domain role is filled by aspartate 977. Positions 994–1129 (ISQIRLRCDW…DSACENTGDI (136 aa)) are nuc-II domain.

It belongs to the CRISPR-associated endonuclease Cas12b family. Monomer. Requires a divalent metal cation as cofactor.

CRISPR (clustered regularly interspaced short palindromic repeat), is an adaptive immune system that provides protection against mobile genetic elements (viruses, transposable elements and conjugative plasmids). CRISPR clusters contain sequences complementary to antecedent mobile elements and target invading nucleic acids. CRISPR clusters are transcribed and processed into CRISPR RNA (crRNA). In type II CRISPR systems correct processing of pre-crRNA requires a trans-encoded small RNA (tracrRNA), endogenous ribonuclease 3 (rnc) and this protein. The tracrRNA serves as a guide for ribonuclease 3-aided processing of pre-crRNA. Protein-crRNA-tracrRNA endonucleolytically cleave dsDNA target complementary to the spacer; protein is inactive in the absence of crRNA homologous to the target and tracrRNA. Recognizes a short motif in the CRISPR repeat sequences (the 5' PAM or protospacer adjacent motif, TTN in this organism) to help distinguish self versus nonself, as targets within the bacterial CRISPR locus do not have PAMs. PAM recognition is also required for catalytic activity. Cleavage results in staggered 6-8 base 5'-overhangs 14-17 and 23-24 bases downstream of the PAM (protospacer adjacent motif) on the non-target and target strands respectively. Both target and non-target strand DNA are probably independently cleaved in the same active site. This Alicyclobacillus acidoterrestris (strain ATCC 49025 / DSM 3922 / CIP 106132 / NCIMB 13137 / GD3B) protein is CRISPR-associated endonuclease Cas12b.